Reading from the N-terminus, the 369-residue chain is Outer membrane protein P2 (369 aa).

The first 20 residues, 1–20 (MKKTLAALIVGAFAASAANA), serve as a signal peptide directing secretion.

It belongs to the Gram-negative porin family. Homotrimer.

It localises to the cell outer membrane. Its function is as follows. Forms pores that allow passive diffusion of small molecules across the outer membrane. In Haemophilus influenzae, this protein is Outer membrane protein P2 (ompP2).